A 231-amino-acid polypeptide reads, in one-letter code: 7-cyano-7-deazaguanine synthase (231 aa).

8–18 (FSGGQDSTTCL) lines the ATP pocket. Zn(2+) contacts are provided by C188, C197, C200, and C203.

The protein belongs to the QueC family. Zn(2+) is required as a cofactor.

The catalysed reaction is 7-carboxy-7-deazaguanine + NH4(+) + ATP = 7-cyano-7-deazaguanine + ADP + phosphate + H2O + H(+). The protein operates within purine metabolism; 7-cyano-7-deazaguanine biosynthesis. Functionally, catalyzes the ATP-dependent conversion of 7-carboxy-7-deazaguanine (CDG) to 7-cyano-7-deazaguanine (preQ(0)). The protein is 7-cyano-7-deazaguanine synthase of Pectobacterium carotovorum subsp. carotovorum (strain PC1).